We begin with the raw amino-acid sequence, 269 residues long: MNTIPRYAVFGNPVAHSKSPQIHRQFALQEGVEIEYERICADIGGFAQAVEAFFANGGRGANVTVPFKQEAFALSDEHSERALAAGAVNTLILLENGKIRGDNTDGLGLTDDIAKRLGVEISDKTVLLLGAGGAVRGVIPVLKEYHPARIVIANRTHAKAAEMAVHFDIDAVPLDELEGGFDIIINGTSGGLSGQLPAVSPKIFEHCTLAYDMVYGEAAEPFLAFARQSGAKQTADGLGMLVGQAAASYRLWRGFAPDVLPVVQYMREL.

Shikimate contacts are provided by residues 17–19 (SKS) and threonine 64. The active-site Proton acceptor is lysine 68. Glutamate 80 provides a ligand contact to NADP(+). Shikimate is bound by residues asparagine 89 and aspartate 105. NADP(+) contacts are provided by residues 130 to 134 (GAGGA), 154 to 159 (NRTHAK), and methionine 213. A shikimate-binding site is contributed by tyrosine 215. Glycine 237 is an NADP(+) binding site.

It belongs to the shikimate dehydrogenase family. Homodimer.

It carries out the reaction shikimate + NADP(+) = 3-dehydroshikimate + NADPH + H(+). It functions in the pathway metabolic intermediate biosynthesis; chorismate biosynthesis; chorismate from D-erythrose 4-phosphate and phosphoenolpyruvate: step 4/7. Its function is as follows. Involved in the biosynthesis of the chorismate, which leads to the biosynthesis of aromatic amino acids. Catalyzes the reversible NADPH linked reduction of 3-dehydroshikimate (DHSA) to yield shikimate (SA). The protein is Shikimate dehydrogenase (NADP(+)) of Neisseria pharyngis.